The chain runs to 60 residues: Large ribosomal subunit protein uL30 (60 aa).

It belongs to the universal ribosomal protein uL30 family. In terms of assembly, part of the 50S ribosomal subunit.

This is Large ribosomal subunit protein uL30 from Histophilus somni (strain 2336) (Haemophilus somnus).